Reading from the N-terminus, the 502-residue chain is Dynein regulatory complex subunit 2 (502 aa).

Coiled-coil stretches lie at residues 96 to 160 (DSVI…RKAI) and 252 to 285 (EKSS…HSRE).

The protein belongs to the DRC2 family. As to quaternary structure, component of the nexin-dynein regulatory complex (N-DRC). Interacts with DRC1.

It is found in the cytoplasm. The protein localises to the cytoskeleton. Its subcellular location is the flagellum basal body. The protein resides in the cell projection. It localises to the cilium. It is found in the flagellum. The protein localises to the flagellum axoneme. In terms of biological role, component of the nexin-dynein regulatory complex (N-DRC), a key regulator of ciliary/flagellar motility which maintains the alignment and integrity of the distal axoneme and regulates microtubule sliding in motile axonemes. Plays a critical role in the assembly of N-DRC and also stabilizes the assembly of multiple inner dynein arms and radial spokes. Coassembles with DRC1 to form a central scaffold needed for assembly of the N-DRC and its attachment to the outer doublet microtubules. The sequence is that of Dynein regulatory complex subunit 2 (Ccdc65) from Rattus norvegicus (Rat).